A 380-amino-acid polypeptide reads, in one-letter code: Cytochrome b (380 aa).

Transmembrane regions (helical) follow at residues 34-54 (FGSL…LLAM), 78-99 (WLIR…YLHI), 114-134 (WNTG…GYVL), and 179-199 (FFAL…IHLT). Residues His-84 and His-98 each coordinate heme b. The heme b site is built by His-183 and His-197. His-202 is an a ubiquinone binding site. 4 helical membrane-spanning segments follow: residues 227 to 247 (LKDI…ALFS), 289 to 309 (LGGV…PFLH), 321 to 341 (LSQL…WVGS), and 348 to 368 (FIII…ILFP).

The protein belongs to the cytochrome b family. The cytochrome bc1 complex contains 11 subunits: 3 respiratory subunits (MT-CYB, CYC1 and UQCRFS1), 2 core proteins (UQCRC1 and UQCRC2) and 6 low-molecular weight proteins (UQCRH/QCR6, UQCRB/QCR7, UQCRQ/QCR8, UQCR10/QCR9, UQCR11/QCR10 and a cleavage product of UQCRFS1). This cytochrome bc1 complex then forms a dimer. Heme b serves as cofactor.

The protein resides in the mitochondrion inner membrane. In terms of biological role, component of the ubiquinol-cytochrome c reductase complex (complex III or cytochrome b-c1 complex) that is part of the mitochondrial respiratory chain. The b-c1 complex mediates electron transfer from ubiquinol to cytochrome c. Contributes to the generation of a proton gradient across the mitochondrial membrane that is then used for ATP synthesis. In Pterodroma hypoleuca (Bonin petrel), this protein is Cytochrome b (MT-CYB).